A 151-amino-acid polypeptide reads, in one-letter code: D-aminoacyl-tRNA deacylase (151 aa).

The short motif at 136–137 (GP) is the Gly-cisPro motif, important for rejection of L-amino acids element.

This sequence belongs to the DTD family. In terms of assembly, homodimer.

The protein resides in the cytoplasm. It catalyses the reaction glycyl-tRNA(Ala) + H2O = tRNA(Ala) + glycine + H(+). The enzyme catalyses a D-aminoacyl-tRNA + H2O = a tRNA + a D-alpha-amino acid + H(+). In terms of biological role, an aminoacyl-tRNA editing enzyme that deacylates mischarged D-aminoacyl-tRNAs. Also deacylates mischarged glycyl-tRNA(Ala), protecting cells against glycine mischarging by AlaRS. Acts via tRNA-based rather than protein-based catalysis; rejects L-amino acids rather than detecting D-amino acids in the active site. By recycling D-aminoacyl-tRNA to D-amino acids and free tRNA molecules, this enzyme counteracts the toxicity associated with the formation of D-aminoacyl-tRNA entities in vivo and helps enforce protein L-homochirality. The sequence is that of D-aminoacyl-tRNA deacylase from Lactococcus lactis subsp. cremoris (strain MG1363).